The chain runs to 100 residues: Small ribosomal subunit protein uS14c (100 aa).

It belongs to the universal ribosomal protein uS14 family. As to quaternary structure, part of the 30S ribosomal subunit.

It is found in the plastid. The protein localises to the chloroplast. Functionally, binds 16S rRNA, required for the assembly of 30S particles. This chain is Small ribosomal subunit protein uS14c, found in Gracilaria tenuistipitata var. liui (Red alga).